The chain runs to 393 residues: Formate-dependent phosphoribosylglycinamide formyltransferase (393 aa).

N(1)-(5-phospho-beta-D-ribosyl)glycinamide contacts are provided by residues 22 to 23 (EL) and E82. ATP-binding positions include R114, K155, 160 to 165 (SSGKGQ), 195 to 198 (EGFI), and E203. An ATP-grasp domain is found at 119-308 (RLAAEELDLP…QFALHARAIL (190 aa)). Mg(2+) contacts are provided by E267 and E279. N(1)-(5-phospho-beta-D-ribosyl)glycinamide is bound by residues D286, K356, and 363-364 (RR).

Belongs to the PurK/PurT family. In terms of assembly, homodimer.

It carries out the reaction N(1)-(5-phospho-beta-D-ribosyl)glycinamide + formate + ATP = N(2)-formyl-N(1)-(5-phospho-beta-D-ribosyl)glycinamide + ADP + phosphate + H(+). Its pathway is purine metabolism; IMP biosynthesis via de novo pathway; N(2)-formyl-N(1)-(5-phospho-D-ribosyl)glycinamide from N(1)-(5-phospho-D-ribosyl)glycinamide (formate route): step 1/1. Functionally, involved in the de novo purine biosynthesis. Catalyzes the transfer of formate to 5-phospho-ribosyl-glycinamide (GAR), producing 5-phospho-ribosyl-N-formylglycinamide (FGAR). Formate is provided by PurU via hydrolysis of 10-formyl-tetrahydrofolate. The sequence is that of Formate-dependent phosphoribosylglycinamide formyltransferase from Pseudomonas putida (strain ATCC 47054 / DSM 6125 / CFBP 8728 / NCIMB 11950 / KT2440).